Consider the following 651-residue polypeptide: DNA mismatch repair protein MutL (651 aa).

A disordered region spans residues 383–405; sequence TAAEEPTPAPTSPDLEIGDLDDQ.

Belongs to the DNA mismatch repair MutL/HexB family.

In terms of biological role, this protein is involved in the repair of mismatches in DNA. It is required for dam-dependent methyl-directed DNA mismatch repair. May act as a 'molecular matchmaker', a protein that promotes the formation of a stable complex between two or more DNA-binding proteins in an ATP-dependent manner without itself being part of a final effector complex. This Lacticaseibacillus paracasei (strain ATCC 334 / BCRC 17002 / CCUG 31169 / CIP 107868 / KCTC 3260 / NRRL B-441) (Lactobacillus paracasei) protein is DNA mismatch repair protein MutL.